Consider the following 489-residue polypeptide: Glutamate--tRNA ligase (489 aa).

The 'HIGH' region signature appears at 11-21; that stretch reads PSPTGHLHIGN. A 'KMSKS' region motif is present at residues 252–256; it reads KLSKR. K255 contacts ATP.

Belongs to the class-I aminoacyl-tRNA synthetase family. Glutamate--tRNA ligase type 1 subfamily. As to quaternary structure, monomer.

It is found in the cytoplasm. The catalysed reaction is tRNA(Glu) + L-glutamate + ATP = L-glutamyl-tRNA(Glu) + AMP + diphosphate. Catalyzes the attachment of glutamate to tRNA(Glu) in a two-step reaction: glutamate is first activated by ATP to form Glu-AMP and then transferred to the acceptor end of tRNA(Glu). This is Glutamate--tRNA ligase from Oceanobacillus iheyensis (strain DSM 14371 / CIP 107618 / JCM 11309 / KCTC 3954 / HTE831).